Consider the following 151-residue polypeptide: Small ribosomal subunit protein uS15 (151 aa).

This sequence belongs to the universal ribosomal protein uS15 family.

This is Small ribosomal subunit protein uS15 (RPS13) from Ciona intestinalis (Transparent sea squirt).